The sequence spans 364 residues: Methylthioribose-1-phosphate isomerase (364 aa).

The active-site Proton donor is aspartate 254.

This sequence belongs to the eIF-2B alpha/beta/delta subunits family. MtnA subfamily.

Its subcellular location is the cytoplasm. It localises to the nucleus. It catalyses the reaction 5-(methylsulfanyl)-alpha-D-ribose 1-phosphate = 5-(methylsulfanyl)-D-ribulose 1-phosphate. It participates in amino-acid biosynthesis; L-methionine biosynthesis via salvage pathway; L-methionine from S-methyl-5-thio-alpha-D-ribose 1-phosphate: step 1/6. Functionally, catalyzes the interconversion of methylthioribose-1-phosphate (MTR-1-P) into methylthioribulose-1-phosphate (MTRu-1-P). In Drosophila simulans (Fruit fly), this protein is Methylthioribose-1-phosphate isomerase.